Here is an 85-residue protein sequence, read N- to C-terminus: Kunitz-type serine protease inhibitor homolog beta-bungarotoxin B3 chain (85 aa).

An N-terminal signal peptide occupies residues 1–24 (MSSGGLLLLLGLLTLWAELTPVSS). Residues 31 to 81 (CDKPPDTRICQTVVRAFYYKPSEKRCVQFRYGGCKGNGNHFKSDHLCRCEC) enclose the BPTI/Kunitz inhibitor domain. Cystine bridges form between C31-C81, C40-C64, and C56-C77.

Belongs to the venom Kunitz-type family. As to quaternary structure, heterodimer; disulfide-linked. The A chain has phospholipase A2 activity and the B chain shows homology with the basic protease inhibitors. Expressed by the venom gland.

The protein resides in the secreted. Functionally, beta-bungarotoxin is a presynaptic neurotoxin of the venom. The B chain is homologous to venom basic protease inhibitors but has no protease inhibitor activity and is non-toxic. This chain is Kunitz-type serine protease inhibitor homolog beta-bungarotoxin B3 chain, found in Bungarus candidus (Malayan krait).